Reading from the N-terminus, the 585-residue chain is A-type ATP synthase subunit A (585 aa).

232-239 (GPFGSGKT) serves as a coordination point for ATP.

Belongs to the ATPase alpha/beta chains family. Has multiple subunits with at least A(3), B(3), C, D, E, F, H, I and proteolipid K(x).

The protein localises to the cell membrane. The catalysed reaction is ATP + H2O + 4 H(+)(in) = ADP + phosphate + 5 H(+)(out). Functionally, component of the A-type ATP synthase that produces ATP from ADP in the presence of a proton gradient across the membrane. The A chain is the catalytic subunit. The polypeptide is A-type ATP synthase subunit A (Methanosphaera stadtmanae (strain ATCC 43021 / DSM 3091 / JCM 11832 / MCB-3)).